The primary structure comprises 1248 residues: ATP-dependent helicase/nuclease subunit A (1248 aa).

Residues 4–480 (TKWTKEQYAA…ILLFKNFRSR (477 aa)) enclose the UvrD-like helicase ATP-binding domain. 25 to 32 (AAAGAGKT) serves as a coordination point for ATP. In terms of domain architecture, UvrD-like helicase C-terminal spans 523–820 (ETVVGGAIEL…RLMSIHKSKG (298 aa)).

Belongs to the helicase family. AddA subfamily. Heterodimer of AddA and AddB/RexB. Mg(2+) is required as a cofactor.

It catalyses the reaction Couples ATP hydrolysis with the unwinding of duplex DNA by translocating in the 3'-5' direction.. The catalysed reaction is ATP + H2O = ADP + phosphate + H(+). Functionally, the heterodimer acts as both an ATP-dependent DNA helicase and an ATP-dependent, dual-direction single-stranded exonuclease. Recognizes the chi site generating a DNA molecule suitable for the initiation of homologous recombination. The AddA nuclease domain is required for chi fragment generation; this subunit has the helicase and 3' -&gt; 5' nuclease activities. The sequence is that of ATP-dependent helicase/nuclease subunit A from Ruminiclostridium cellulolyticum (strain ATCC 35319 / DSM 5812 / JCM 6584 / H10) (Clostridium cellulolyticum).